Consider the following 595-residue polypeptide: P2X purinoceptor 7 (595 aa).

Residues 1 to 22 lie on the Cytoplasmic side of the membrane; it reads MPACCSCSDVFQYETNKVTRIQ. Cys-4 carries S-palmitoyl cysteine lipidation. The chain crosses the membrane as a helical span at residues 23–46; it reads SMNYGTIKWFFHVIIFSYVCFALV. Residues 47-328 lie on the Extracellular side of the membrane; the sequence is SDKLYQRKEP…ILVFGTGGKF (282 aa). 3 cysteine pairs are disulfide-bonded: Cys-119/Cys-168, Cys-129/Cys-152, and Cys-135/Cys-162. ADP-ribosylarginine occurs at positions 125 and 133. The N-linked (GlcNAc...) asparagine glycan is linked to Asn-187. An ATP-binding site is contributed by Thr-189. Residues Asn-202 and Asn-213 are each glycosylated (N-linked (GlcNAc...) asparagine). Residues Cys-216 and Cys-226 are joined by a disulfide bond. N-linked (GlcNAc...) asparagine glycosylation occurs at Asn-241. Cys-260 and Cys-269 are oxidised to a cystine. Residue Asn-284 is glycosylated (N-linked (GlcNAc...) asparagine). Arg-294 and Lys-311 together coordinate ATP. The chain crosses the membrane as a helical span at residues 329-353; the sequence is DIIQLVVYIGSTLSYFGLAAVFIDF. Residue Ser-342 participates in Na(+) binding. Tyr-343 carries the phosphotyrosine modification. The Cytoplasmic portion of the chain corresponds to 354–595; it reads LIDTYSSNCC…GQYSGFKSPY (242 aa). Residues 360–377 are C-cys anchor; it reads SNCCRSHIYPWCKCCQPC. 4 S-palmitoyl cysteine lipidation sites follow: Cys-362, Cys-363, Cys-374, and Cys-377. Phosphoserine is present on Ser-390. Residues 395–595 are cytoplasmic ballast; it reads KPTLKYVSFV…GQYSGFKSPY (201 aa). Zn(2+) contacts are provided by Cys-479, Cys-499, and Cys-506. GTP is bound by residues Arg-546, His-547, Tyr-550, and Ala-567. Cys-572 is a binding site for Zn(2+). Lys-583, Ser-589, and Gly-590 together coordinate GTP.

Belongs to the P2X receptor family. Homotrimers. Interacts with LAMA3, ITGB2, ACTB, ACTN4, SVIL, MPP3, HSPA1, HSPCB, HSPA8, PIK230 and PTPRB. Interacts (via C-terminus) with EMP2. Interacts with isoform B; this interaction potentiates P2RX7 responses. Phosphorylation results in its inactivation. Post-translationally, ADP-ribosylation at Arg-125 is necessary and sufficient to activate P2RX7 and gate the channel. In terms of processing, palmitoylation of several cysteines in the C-terminal cytoplasmic tail is required for efficient localization to cell surface. Palmitoylation prevents channel desensitization by physically anchoring the palmitoylated groups to the membrane. Widely expressed with highest levels in brain and immune tissues. As to expression, predominant form in many tissues.

It is found in the cell membrane. It catalyses the reaction Ca(2+)(in) = Ca(2+)(out). The catalysed reaction is K(+)(in) = K(+)(out). The enzyme catalyses Na(+)(in) = Na(+)(out). With respect to regulation, activated by high extracellular ATP levels (0.1-2.5 mM). The synthetic analog 2'(3')-O-(4-benzoylbenzoyl)ATP (BzATP) acts as a potent agonist. Does not undergo desensitization, instead, undergoes a facilitation process where currents progressively increase with repetitive or prolonged agonist application. Palmitoylation prevents channel desensitization. The permeability of the P2RX7 channel is modulated by the amount of cholesterol in the plasma membrane. Functionally, ATP-gated nonselective transmembrane cation channel that requires high millimolar concentrations of ATP for activation. Upon ATP binding, it rapidly opens to allow the influx of small cations Na(+) and Ca(2+), and the K(+) efflux. Also has the ability to form a large pore in the cell membrane, allowing the passage of large cationic molecules. In microglia, may mediate NADPH transport across the plasma membrane. In immune cells, P2RX7 acts as a molecular sensor in pathological inflammatory states by detecting and responding to high local concentrations of extracellar ATP. In microglial cells, P2RX7 activation leads to the release of pro-inflammatory cytokines, such as IL-1beta and IL-18, through the activation of the NLRP3 inflammasome and caspase-1. Cooperates with KCNK6 to activate NLRP3 inflammasome. Activates death pathways leading to apoptosis and autophagy. Activates death pathways leading to pyroptosis. Shows ion channel activity but no macropore function. Its function is as follows. Non-functional channel. This Homo sapiens (Human) protein is P2X purinoceptor 7 (P2RX7).